The following is a 408-amino-acid chain: Tryptophan synthase beta chain (408 aa).

At K97 the chain carries N6-(pyridoxal phosphate)lysine.

This sequence belongs to the TrpB family. In terms of assembly, tetramer of two alpha and two beta chains. Pyridoxal 5'-phosphate is required as a cofactor.

It carries out the reaction (1S,2R)-1-C-(indol-3-yl)glycerol 3-phosphate + L-serine = D-glyceraldehyde 3-phosphate + L-tryptophan + H2O. It participates in amino-acid biosynthesis; L-tryptophan biosynthesis; L-tryptophan from chorismate: step 5/5. The beta subunit is responsible for the synthesis of L-tryptophan from indole and L-serine. This chain is Tryptophan synthase beta chain (trpB), found in Pseudomonas syringae pv. syringae.